Consider the following 259-residue polypeptide: MKLGVNIDHIATIRNARQINEPDPLMALQILKEAGADQVTIHLREDRRHITDFDAGRICQNSFLPVNMECSINPEIIDIICSLKPHRATLVPEKREEVTTEGGLDIIKFEKEIKNAIEKLHNNDIEVSLFIDPDFEQITKSAEVGAEMIELHTGKYANLHLALNTNINSTPFKVFENMDRKTLKKELELELKLLKDATILGNELGLEVAAGHGLNYQNVKPVADIEGIVELNIGHSIIANSVFLGLKQAIIQMRELING.

A 3-amino-2-oxopropyl phosphate-binding site is contributed by N6. 1-deoxy-D-xylulose 5-phosphate is bound at residue D8–H9. A 3-amino-2-oxopropyl phosphate-binding site is contributed by R17. The Proton acceptor role is filled by H42. Positions 44 and 49 each coordinate 1-deoxy-D-xylulose 5-phosphate. E69 functions as the Proton acceptor in the catalytic mechanism. Position 99 (T99) interacts with 1-deoxy-D-xylulose 5-phosphate. H212 (proton donor) is an active-site residue. 3-amino-2-oxopropyl phosphate contacts are provided by residues G213 and G234–H235.

Belongs to the PNP synthase family. In terms of assembly, homooctamer; tetramer of dimers.

It localises to the cytoplasm. The enzyme catalyses 3-amino-2-oxopropyl phosphate + 1-deoxy-D-xylulose 5-phosphate = pyridoxine 5'-phosphate + phosphate + 2 H2O + H(+). It functions in the pathway cofactor biosynthesis; pyridoxine 5'-phosphate biosynthesis; pyridoxine 5'-phosphate from D-erythrose 4-phosphate: step 5/5. Functionally, catalyzes the complicated ring closure reaction between the two acyclic compounds 1-deoxy-D-xylulose-5-phosphate (DXP) and 3-amino-2-oxopropyl phosphate (1-amino-acetone-3-phosphate or AAP) to form pyridoxine 5'-phosphate (PNP) and inorganic phosphate. In Nautilia profundicola (strain ATCC BAA-1463 / DSM 18972 / AmH), this protein is Pyridoxine 5'-phosphate synthase.